Reading from the N-terminus, the 207-residue chain is Ciliary microtubule-associated protein 3 (207 aa).

Interacts with proteins involved in ciliary transport, including ARL13B, CETN1, KIF3A, RAB6A, RAB8A, TUBB1 and TUBG1. Interacts with AURKA. In terms of tissue distribution, expressed in tissues rich in ciliated cells, such as lung, kidney, vas deferens and testis. Both isoforms 1 and 2 are expressed in testis.

The protein resides in the golgi apparatus. It localises to the golgi stack. Its subcellular location is the trans-Golgi network. It is found in the nucleus. The protein localises to the cytoplasm. The protein resides in the cytoplasmic vesicle. Functionally, during primary cilia disassembly, involved in cilia disassembly. Required specifically to control cilia retraction as well as the liberation and duplication of the basal body/centrosome. May act by stimulating AURKA activity at the basal body in a cell cycle-dependent manner. The chain is Ciliary microtubule-associated protein 3 (Cimap3) from Mus musculus (Mouse).